The chain runs to 388 residues: Putative membrane protein MJ1562 (388 aa).

The next 6 helical transmembrane spans lie at 22–42, 219–239, 246–266, 273–293, 320–340, and 351–371; these read FLML…ATNV, SQSF…IIYF, IMPL…MGLL, ATAG…IHLM, AVMA…LAPL, and ALGI…LIVI.

It belongs to the resistance-nodulation-cell division (RND) (TC 2.A.6) family. MmpL subfamily.

Its subcellular location is the cell membrane. This chain is Putative membrane protein MJ1562, found in Methanocaldococcus jannaschii (strain ATCC 43067 / DSM 2661 / JAL-1 / JCM 10045 / NBRC 100440) (Methanococcus jannaschii).